The chain runs to 309 residues: Porphobilinogen deaminase (309 aa).

At Cys241 the chain carries S-(dipyrrolylmethanemethyl)cysteine.

This sequence belongs to the HMBS family. As to quaternary structure, monomer. Requires dipyrromethane as cofactor.

It carries out the reaction 4 porphobilinogen + H2O = hydroxymethylbilane + 4 NH4(+). It functions in the pathway porphyrin-containing compound metabolism; protoporphyrin-IX biosynthesis; coproporphyrinogen-III from 5-aminolevulinate: step 2/4. Its function is as follows. Tetrapolymerization of the monopyrrole PBG into the hydroxymethylbilane pre-uroporphyrinogen in several discrete steps. In Bacillus cereus (strain G9842), this protein is Porphobilinogen deaminase.